The following is a 340-amino-acid chain: Myb-related protein Zm1 (340 aa).

HTH myb-type domains are found at residues 11-63 (KVGL…INYL) and 64-118 (RPDL…KKKV). 2 DNA-binding regions (H-T-H motif) span residues 39-63 (WRALPKQAGLLRCGKSCRLRWINYL) and 91-114 (WSKIAACLPGRTDNEIKNVWNTHL). A compositionally biased stretch (basic residues) spans 116 to 126 (KKVAQREKKKA). 2 disordered regions span residues 116–173 (KKVA…DATD) and 190–209 (DGAPPAAQPMPSPSSSSSLT). Positions 133-166 (AGTPATAPLSSATSSTTTHNSSGGSDSGDQCGTS) are enriched in low complexity.

The protein localises to the nucleus. In terms of biological role, transcription factor that positively regulates genes involved in anthocyanin biosynthesis such as A1. The chain is Myb-related protein Zm1 from Zea mays (Maize).